We begin with the raw amino-acid sequence, 73 residues long: Mucroporin-like peptide (73 aa).

The N-terminal stretch at 1-22 (MKVKCLLAVFLIVLIAAEHCQA) is a signal peptide. At lysine 38 the chain carries Lysine amide. A propeptide spanning residues 44–73 (ELGTQFQPRQKNFMRREVDLERLFAEMPDY) is cleaved from the precursor.

It belongs to the non-disulfide-bridged peptide (NDBP) superfamily. Short antimicrobial peptide (group 4) family. In terms of tissue distribution, expressed by the venom gland.

The protein resides in the secreted. It is found in the target cell membrane. Its function is as follows. Cationic host defense peptide that have antibacterial activity by breaking membranes. Is more effective on Gram-positive than on Gram-negative bacteria. The chain is Mucroporin-like peptide from Lychas mucronatus (Chinese swimming scorpion).